The following is a 94-amino-acid chain: Co-chaperonin GroES (94 aa).

Belongs to the GroES chaperonin family. In terms of assembly, heptamer of 7 subunits arranged in a ring. Interacts with the chaperonin GroEL.

The protein localises to the cytoplasm. Functionally, together with the chaperonin GroEL, plays an essential role in assisting protein folding. The GroEL-GroES system forms a nano-cage that allows encapsulation of the non-native substrate proteins and provides a physical environment optimized to promote and accelerate protein folding. GroES binds to the apical surface of the GroEL ring, thereby capping the opening of the GroEL channel. The polypeptide is Co-chaperonin GroES (Lactococcus lactis subsp. cremoris (strain SK11)).